We begin with the raw amino-acid sequence, 260 residues long: E3 ubiquitin-protein ligase SRFP1 (260 aa).

Residues 11-80 (FGRMGFGCKH…VAQVCYNCGV (70 aa)) form a CHY-type zinc finger. Zn(2+) contacts are provided by Cys-18, His-20, Cys-31, Cys-32, Cys-38, Cys-41, His-42, His-50, Cys-62, Cys-65, Cys-75, Cys-78, Cys-87, Cys-90, His-103, Cys-104, Cys-107, Cys-110, His-120, Cys-121, Cys-124, Cys-127, His-136, and Cys-138. Residues 82 to 146 (MGEYFCSACK…CCIENSMKNN (65 aa)) form a CTCHY-type zinc finger. The RING-type; atypical zinc finger occupies 147-190 (CPICYEYLFDSLRETSVLRCGHTMHLQCFHEMLKHDKFSCPICS).

In terms of tissue distribution, expressed in roots, leaves, nodes and panicles.

It localises to the nucleus. The protein localises to the cytoplasm. It carries out the reaction S-ubiquitinyl-[E2 ubiquitin-conjugating enzyme]-L-cysteine + [acceptor protein]-L-lysine = [E2 ubiquitin-conjugating enzyme]-L-cysteine + N(6)-ubiquitinyl-[acceptor protein]-L-lysine.. It participates in protein modification; protein ubiquitination. Its function is as follows. Possesses E3 ubiquitin-protein ligase activity in vitro. Possesses transactivation activity in yeast cells. May modulate abiotic stress responses by negatively regulating antioxidant enzymes-mediated reactive oxygen species (ROS) removal. The protein is E3 ubiquitin-protein ligase SRFP1 of Oryza sativa subsp. japonica (Rice).